Reading from the N-terminus, the 115-residue chain is Non-specific lipid-transfer protein (115 aa).

A signal peptide spans 1–24; it reads MASSAVTKLALVVALCMAVSVAHA. Cystine bridges form between Cys27-Cys74, Cys37-Cys51, Cys52-Cys97, and Cys72-Cys111.

The protein belongs to the plant LTP family.

Plant non-specific lipid-transfer proteins transfer phospholipids as well as galactolipids across membranes. May play a role in wax or cutin deposition in the cell walls of expanding epidermal cells and certain secretory tissues. This chain is Non-specific lipid-transfer protein (MALD3), found in Malus domestica (Apple).